The sequence spans 373 residues: UDP-N-acetylglucosamine--N-acetylmuramyl-(pentapeptide) pyrophosphoryl-undecaprenol N-acetylglucosamine transferase (373 aa).

Residues 14–16 (TAG), asparagine 128, arginine 165, serine 199, and glutamine 295 contribute to the UDP-N-acetyl-alpha-D-glucosamine site.

Belongs to the glycosyltransferase 28 family. MurG subfamily.

The protein resides in the cell membrane. The enzyme catalyses di-trans,octa-cis-undecaprenyl diphospho-N-acetyl-alpha-D-muramoyl-L-alanyl-D-glutamyl-meso-2,6-diaminopimeloyl-D-alanyl-D-alanine + UDP-N-acetyl-alpha-D-glucosamine = di-trans,octa-cis-undecaprenyl diphospho-[N-acetyl-alpha-D-glucosaminyl-(1-&gt;4)]-N-acetyl-alpha-D-muramoyl-L-alanyl-D-glutamyl-meso-2,6-diaminopimeloyl-D-alanyl-D-alanine + UDP + H(+). Its pathway is cell wall biogenesis; peptidoglycan biosynthesis. Functionally, cell wall formation. Catalyzes the transfer of a GlcNAc subunit on undecaprenyl-pyrophosphoryl-MurNAc-pentapeptide (lipid intermediate I) to form undecaprenyl-pyrophosphoryl-MurNAc-(pentapeptide)GlcNAc (lipid intermediate II). This is UDP-N-acetylglucosamine--N-acetylmuramyl-(pentapeptide) pyrophosphoryl-undecaprenol N-acetylglucosamine transferase from Mycobacterium sp. (strain KMS).